The primary structure comprises 466 residues: Exodeoxyribonuclease 7 large subunit (466 aa).

This sequence belongs to the XseA family. As to quaternary structure, heterooligomer composed of large and small subunits.

The protein resides in the cytoplasm. It catalyses the reaction Exonucleolytic cleavage in either 5'- to 3'- or 3'- to 5'-direction to yield nucleoside 5'-phosphates.. Functionally, bidirectionally degrades single-stranded DNA into large acid-insoluble oligonucleotides, which are then degraded further into small acid-soluble oligonucleotides. The sequence is that of Exodeoxyribonuclease 7 large subunit from Vesicomyosocius okutanii subsp. Calyptogena okutanii (strain HA).